Reading from the N-terminus, the 108-residue chain is Large ribosomal subunit protein bL31B (108 aa).

The disordered stretch occupies residues 88-108 (AAVEEAPAVKSKKKAPIKKKK). The segment covering 97 to 108 (KSKKKAPIKKKK) has biased composition (basic residues).

It belongs to the bacterial ribosomal protein bL31 family. Type B subfamily. In terms of assembly, part of the 50S ribosomal subunit.

This chain is Large ribosomal subunit protein bL31B, found in Chlamydia abortus (strain DSM 27085 / S26/3) (Chlamydophila abortus).